A 190-amino-acid polypeptide reads, in one-letter code: DNA dC-&gt;dU-editing enzyme APOBEC-3C (190 aa).

Positions 29–138 constitute a CMP/dCMP-type deaminase domain; that stretch reads DRNETWLCFT…PCYQEGLRSL (110 aa). Residues 40–86 are (Microbial infection) Required for interaction with human foamy virus protein Bet; sequence EGIKRRSVVSWKTGVFRNQVDSETHCHAERCFLSWFCDDILSPNTKY. His-66 contributes to the Zn(2+) binding site. The active-site Proton donor is Glu-68. Positions 97 and 100 each coordinate Zn(2+).

The protein belongs to the cytidine and deoxycytidylate deaminase family. Homodimer. Interacts with TRIB3. Interacts with AGO2. In terms of assembly, (Microbial infection) Interacts with human foamy virus protein Bet; this interaction does not induce APOBEC3C degradation but prevents its dimerization and incorporation into the virion by binding of Bet close to or within the APOBEC3C dimerization site. As to quaternary structure, (Microbial infection) Interacts with HIV-1 Vif. The cofactor is Zn(2+). In terms of tissue distribution, expressed in spleen, testes, peripherical blood lymphocytes, heart, thymus, prostate and ovary.

It is found in the nucleus. It localises to the cytoplasm. The catalysed reaction is a 2'-deoxycytidine in single-stranded DNA + H2O + H(+) = a 2'-deoxyuridine in single-stranded DNA + NH4(+). With respect to regulation, (Microbial infection) Antiviral activity is neutralized by the HIV-1 virion infectivity factor (Vif), that prevents its incorporation into progeny HIV-1 virions by both inhibiting its translation and/or by inducing its ubiquitination and subsequent degradation by the 26S proteasome. DNA deaminase (cytidine deaminase) which acts as an inhibitor of retrovirus replication and retrotransposon mobility via deaminase-dependent and -independent mechanisms. After the penetration of retroviral nucleocapsids into target cells of infection and the initiation of reverse transcription, it can induce the conversion of cytosine to uracil in the minus-sense single-strand viral DNA, leading to G-to-A hypermutations in the subsequent plus-strand viral DNA. The resultant detrimental levels of mutations in the proviral genome, along with a deamination-independent mechanism that works prior to the proviral integration, together exert efficient antiretroviral effects in infected target cells. Selectively targets single-stranded DNA and does not deaminate double-stranded DNA or single- or double-stranded RNA. Exhibits antiviral activity against simian immunodeficiency virus (SIV), hepatitis B virus (HBV), herpes simplex virus 1 (HHV-1) and Epstein-Barr virus (EBV) and may inhibit the mobility of LTR and non-LTR retrotransposons. May also play a role in the epigenetic regulation of gene expression through the process of active DNA demethylation. This is DNA dC-&gt;dU-editing enzyme APOBEC-3C (APOBEC3C) from Homo sapiens (Human).